Here is a 357-residue protein sequence, read N- to C-terminus: UDP-N-acetylglucosamine--N-acetylmuramyl-(pentapeptide) pyrophosphoryl-undecaprenol N-acetylglucosamine transferase (357 aa).

Residues 15 to 17 (TGG), Asn-124, Arg-165, Ser-194, and Gln-288 each bind UDP-N-acetyl-alpha-D-glucosamine.

The protein belongs to the glycosyltransferase 28 family. MurG subfamily.

The protein localises to the cell inner membrane. It carries out the reaction di-trans,octa-cis-undecaprenyl diphospho-N-acetyl-alpha-D-muramoyl-L-alanyl-D-glutamyl-meso-2,6-diaminopimeloyl-D-alanyl-D-alanine + UDP-N-acetyl-alpha-D-glucosamine = di-trans,octa-cis-undecaprenyl diphospho-[N-acetyl-alpha-D-glucosaminyl-(1-&gt;4)]-N-acetyl-alpha-D-muramoyl-L-alanyl-D-glutamyl-meso-2,6-diaminopimeloyl-D-alanyl-D-alanine + UDP + H(+). The protein operates within cell wall biogenesis; peptidoglycan biosynthesis. Its function is as follows. Cell wall formation. Catalyzes the transfer of a GlcNAc subunit on undecaprenyl-pyrophosphoryl-MurNAc-pentapeptide (lipid intermediate I) to form undecaprenyl-pyrophosphoryl-MurNAc-(pentapeptide)GlcNAc (lipid intermediate II). This Nostoc punctiforme (strain ATCC 29133 / PCC 73102) protein is UDP-N-acetylglucosamine--N-acetylmuramyl-(pentapeptide) pyrophosphoryl-undecaprenol N-acetylglucosamine transferase.